We begin with the raw amino-acid sequence, 179 residues long: Large ribosomal subunit protein uL6 (179 aa).

The protein belongs to the universal ribosomal protein uL6 family. As to quaternary structure, part of the 50S ribosomal subunit.

Functionally, this protein binds to the 23S rRNA, and is important in its secondary structure. It is located near the subunit interface in the base of the L7/L12 stalk, and near the tRNA binding site of the peptidyltransferase center. This Rippkaea orientalis (strain PCC 8801 / RF-1) (Cyanothece sp. (strain PCC 8801)) protein is Large ribosomal subunit protein uL6.